Consider the following 149-residue polypeptide: Calmodulin (149 aa).

A2 carries the N-acetylalanine modification. EF-hand domains follow at residues 8–43, 44–79, 81–116, and 117–149; these read EQIA…LGQN, PTEA…KMKD, DSEE…LGEK, and LTDE…MMAK. D21, D23, D25, T27, E32, D57, D59, N61, T63, E68, D94, D96, N98, and E105 together coordinate Ca(2+). Residue K116 is modified to N6,N6,N6-trimethyllysine. 5 residues coordinate Ca(2+): D130, D132, D134, Q136, and E141.

The protein belongs to the calmodulin family.

Its function is as follows. Calmodulin mediates the control of a large number of enzymes, ion channels and other proteins by Ca(2+). Among the enzymes to be stimulated by the calmodulin-Ca(2+) complex are a number of protein kinases and phosphatases. The protein is Calmodulin of Macrocystis pyrifera (Giant kelp).